Consider the following 49-residue polypeptide: Large ribosomal subunit protein bL33B (49 aa).

This sequence belongs to the bacterial ribosomal protein bL33 family.

The polypeptide is Large ribosomal subunit protein bL33B (rpmG2) (Lactococcus lactis subsp. cremoris (Streptococcus cremoris)).